We begin with the raw amino-acid sequence, 399 residues long: MIIKPRIRGFICVTAHPAGCKANVEKQIEYVTAQGAITSGPKKVLVIGASTGYGLAARISAAFGCNADTLGVFFERAGEENKPATAGWYNSAAFEELATAKGLYANSINGDAYSDAVKQKTIETIRQDLGQVDLVVYSLAAPRRTHPKTGEVFNSTLKPIGKPLTTRGLNTDKETITDVSLEPASAEEIEGTVAVMGGEDWQMWIDALLEAGVLAEGAKTTAFTYLGEKITHDIYWNGSIGEAKKDLDKRVLTIRDTLAAHGNGDARVSVLKAVVTQASSAIPVMPLYLSLLFKVMKEKGTHEGCIEQVYGLFKDSLYNAAPIVDETGRLRADYKELQPEVQDEVSALWPTVTNENLNQLTDFVGYKKEFMHLFGFGLEGVDYDADVNPDVKIKNLVQM.

Residues 48-53, 74-75, 111-112, and 139-140 contribute to the NAD(+) site; these read GASTGY, FE, DA, and LA. Residue Y225 coordinates substrate. Residue Y235 is the Proton donor of the active site. NAD(+)-binding positions include K244 and 274–276; that span reads VVT.

Belongs to the TER reductase family. In terms of assembly, monomer.

It catalyses the reaction a 2,3-saturated acyl-[ACP] + NAD(+) = a (2E)-enoyl-[ACP] + NADH + H(+). It participates in lipid metabolism; fatty acid biosynthesis. Involved in the final reduction of the elongation cycle of fatty acid synthesis (FAS II). Catalyzes the reduction of a carbon-carbon double bond in an enoyl moiety that is covalently linked to an acyl carrier protein (ACP). This Erwinia tasmaniensis (strain DSM 17950 / CFBP 7177 / CIP 109463 / NCPPB 4357 / Et1/99) protein is Enoyl-[acyl-carrier-protein] reductase [NADH].